The chain runs to 139 residues: Heavy metal-associated isoprenylated plant protein 13 (139 aa).

Positions Pro3–Glu70 constitute an HMA domain. Positions Glu70–Ala94 are disordered. The span at Lys73–Ala85 shows a compositional bias: basic and acidic residues. At Cys136 the chain carries Cysteine methyl ester. The S-farnesyl cysteine moiety is linked to residue Cys136. A propeptide spans Val137–Met139 (removed in mature form).

Belongs to the HIPP family.

Its function is as follows. Probable heavy-metal-binding protein. This is Heavy metal-associated isoprenylated plant protein 13 from Arabidopsis thaliana (Mouse-ear cress).